The primary structure comprises 970 residues: Unconventional myosin-XIX (970 aa).

The Myosin motor domain maps to 35–758 (YKLDDLTRVN…MLELLECGRA (724 aa)). An ATP-binding site is contributed by 132 to 139 (GESGAGKT). The tract at residues 602-624 (LEQLLQVLHSTTPHYIRCIKPNS) is actin-binding. S685 is modified (phosphoserine). 2 consecutive IQ domains span residues 759–779 (RVLEQCARCIQGGWRRHRHRE) and 783–812 (QWRAVMLIQAAIRSWLTRKHIQRLHAAATV). Residues 824–970 (MACLAAKELD…VTSSAFTGLG (147 aa)) are myMOMA region.

Belongs to the TRAFAC class myosin-kinesin ATPase superfamily. Myosin family. Myosin is a hexamer of 2 heavy chains and 4 light chains: interacts with myosin light chains MYL9 and MYL12B. Widely expressed in multiple tissues and cell lines.

It is found in the mitochondrion outer membrane. Its subcellular location is the cytoplasm. The protein resides in the cytoskeleton. Actin-based motor molecule with ATPase activity that localizes to the mitochondrion outer membrane. Motor protein that moves towards the plus-end of actin filaments. Required for mitochondrial inheritance during mitosis. May be involved in mitochondrial transport or positioning. In Homo sapiens (Human), this protein is Unconventional myosin-XIX.